Reading from the N-terminus, the 236-residue chain is 1-(5-phosphoribosyl)-5-[(5-phosphoribosylamino)methylideneamino] imidazole-4-carboxamide isomerase (236 aa).

The Proton acceptor role is filled by aspartate 8. Aspartate 129 (proton donor) is an active-site residue.

The protein belongs to the HisA/HisF family.

The protein resides in the cytoplasm. It carries out the reaction 1-(5-phospho-beta-D-ribosyl)-5-[(5-phospho-beta-D-ribosylamino)methylideneamino]imidazole-4-carboxamide = 5-[(5-phospho-1-deoxy-D-ribulos-1-ylimino)methylamino]-1-(5-phospho-beta-D-ribosyl)imidazole-4-carboxamide. Its pathway is amino-acid biosynthesis; L-histidine biosynthesis; L-histidine from 5-phospho-alpha-D-ribose 1-diphosphate: step 4/9. The protein is 1-(5-phosphoribosyl)-5-[(5-phosphoribosylamino)methylideneamino] imidazole-4-carboxamide isomerase of Methanoregula boonei (strain DSM 21154 / JCM 14090 / 6A8).